The following is a 253-amino-acid chain: uncharacterized protein (253 aa).

The protein belongs to the NAD(P)-dependent epimerase/dehydratase family.

This is an uncharacterized protein from Bacillus subtilis (strain 168).